A 323-amino-acid chain; its full sequence is CYFIP-related Rac1 interactor A (323 aa).

Belongs to the CYRI family.

Its subcellular location is the membrane. May negatively regulate RAC1 signaling and RAC1-driven cytoskeletal remodeling. May regulate chemotaxis, cell migration and epithelial polarization by controlling the polarity, plasticity, duration and extent of protrusions. In Gallus gallus (Chicken), this protein is CYFIP-related Rac1 interactor A (CYRIA).